The sequence spans 267 residues: Glutamate racemase (267 aa).

Substrate contacts are provided by residues 13–14 (DS) and 45–46 (YS). Catalysis depends on Cys-77, which acts as the Proton donor/acceptor. 78–79 (NT) is a binding site for substrate. Cys-188 functions as the Proton donor/acceptor in the catalytic mechanism. 189 to 190 (TH) contributes to the substrate binding site.

Belongs to the aspartate/glutamate racemases family.

The enzyme catalyses L-glutamate = D-glutamate. The protein operates within cell wall biogenesis; peptidoglycan biosynthesis. Its function is as follows. Provides the (R)-glutamate required for cell wall biosynthesis. This Histophilus somni (strain 2336) (Haemophilus somnus) protein is Glutamate racemase.